A 194-amino-acid polypeptide reads, in one-letter code: Putative 3-methyladenine DNA glycosylase (194 aa).

This sequence belongs to the DNA glycosylase MPG family.

The sequence is that of Putative 3-methyladenine DNA glycosylase from Myxococcus xanthus (strain DK1622).